The following is a 226-amino-acid chain: Ribonuclease 3 (226 aa).

One can recognise an RNase III domain in the interval 2-129 (IETISKTIKY…LIGAIYLDGG (128 aa)). Glu42 serves as a coordination point for Mg(2+). Asp46 is a catalytic residue. Residues Asn115 and Glu118 each coordinate Mg(2+). The active site involves Glu118. A DRBM domain is found at 154 to 223 (DAKTILQEFI…ASLMLNQIKD (70 aa)).

Belongs to the ribonuclease III family. Homodimer. It depends on Mg(2+) as a cofactor.

Its subcellular location is the cytoplasm. It catalyses the reaction Endonucleolytic cleavage to 5'-phosphomonoester.. Digests double-stranded RNA. Involved in the processing of primary rRNA transcript to yield the immediate precursors to the large and small rRNAs (23S and 16S). Processes some mRNAs, and tRNAs when they are encoded in the rRNA operon. Processes pre-crRNA and tracrRNA of type II CRISPR loci if present in the organism. This Ehrlichia canis (strain Jake) protein is Ribonuclease 3.